A 360-amino-acid chain; its full sequence is UDP-N-acetylglucosamine--N-acetylmuramyl-(pentapeptide) pyrophosphoryl-undecaprenol N-acetylglucosamine transferase (360 aa).

UDP-N-acetyl-alpha-D-glucosamine-binding positions include 12–14 (TAG), serine 198, and glutamine 289.

This sequence belongs to the glycosyltransferase 28 family. MurG subfamily.

It is found in the cell membrane. The catalysed reaction is Mur2Ac(oyl-L-Ala-gamma-D-Glu-L-Lys-D-Ala-D-Ala)-di-trans,octa-cis-undecaprenyl diphosphate + UDP-N-acetyl-alpha-D-glucosamine = beta-D-GlcNAc-(1-&gt;4)-Mur2Ac(oyl-L-Ala-gamma-D-Glu-L-Lys-D-Ala-D-Ala)-di-trans,octa-cis-undecaprenyl diphosphate + UDP + H(+). The protein operates within cell wall biogenesis; peptidoglycan biosynthesis. Functionally, cell wall formation. Catalyzes the transfer of a GlcNAc subunit on undecaprenyl-pyrophosphoryl-MurNAc-pentapeptide (lipid intermediate I) to form undecaprenyl-pyrophosphoryl-MurNAc-(pentapeptide)GlcNAc (lipid intermediate II). This Streptococcus equi subsp. zooepidemicus (strain MGCS10565) protein is UDP-N-acetylglucosamine--N-acetylmuramyl-(pentapeptide) pyrophosphoryl-undecaprenol N-acetylglucosamine transferase.